The chain runs to 183 residues: Pectinesterase inhibitor 8 (183 aa).

The N-terminal stretch at 1–30 (MAQRASRRPAAAAAAVVVAVVLAVSGGVGA) is a signal peptide. 2 cysteine pairs are disulfide-bonded: C36-C51 and C107-C147.

Belongs to the PMEI family.

The protein localises to the secreted. The protein resides in the extracellular space. It localises to the apoplast. Functionally, pectin methylesterase (PME) inhibitor that inhibits PME in vitro. In Oryza sativa subsp. japonica (Rice), this protein is Pectinesterase inhibitor 8.